The chain runs to 197 residues: dITP/XTP pyrophosphatase (197 aa).

A substrate-binding site is contributed by 8–13; that stretch reads TGNAGK. Residues Glu40 and Asp69 each contribute to the Mg(2+) site. The active-site Proton acceptor is the Asp69. Residues Ser70, 154–157, Lys177, and 182–183 each bind substrate; these read FGYD and HR.

This sequence belongs to the HAM1 NTPase family. As to quaternary structure, homodimer. Requires Mg(2+) as cofactor.

The catalysed reaction is XTP + H2O = XMP + diphosphate + H(+). The enzyme catalyses dITP + H2O = dIMP + diphosphate + H(+). It catalyses the reaction ITP + H2O = IMP + diphosphate + H(+). Its function is as follows. Pyrophosphatase that catalyzes the hydrolysis of nucleoside triphosphates to their monophosphate derivatives, with a high preference for the non-canonical purine nucleotides XTP (xanthosine triphosphate), dITP (deoxyinosine triphosphate) and ITP. Seems to function as a house-cleaning enzyme that removes non-canonical purine nucleotides from the nucleotide pool, thus preventing their incorporation into DNA/RNA and avoiding chromosomal lesions. The sequence is that of dITP/XTP pyrophosphatase (rdgB) from Salmonella paratyphi A (strain ATCC 9150 / SARB42).